The following is a 202-amino-acid chain: Orotate phosphoribosyltransferase (202 aa).

5-phospho-alpha-D-ribose 1-diphosphate is bound by residues lysine 93 and 113 to 121 (EDIITTGGS). Residues threonine 117 and arginine 145 each contribute to the orotate site.

Belongs to the purine/pyrimidine phosphoribosyltransferase family. PyrE subfamily. As to quaternary structure, homodimer. Requires Mg(2+) as cofactor.

The enzyme catalyses orotidine 5'-phosphate + diphosphate = orotate + 5-phospho-alpha-D-ribose 1-diphosphate. It functions in the pathway pyrimidine metabolism; UMP biosynthesis via de novo pathway; UMP from orotate: step 1/2. Functionally, catalyzes the transfer of a ribosyl phosphate group from 5-phosphoribose 1-diphosphate to orotate, leading to the formation of orotidine monophosphate (OMP). In Campylobacter hominis (strain ATCC BAA-381 / DSM 21671 / CCUG 45161 / LMG 19568 / NCTC 13146 / CH001A), this protein is Orotate phosphoribosyltransferase.